A 281-amino-acid polypeptide reads, in one-letter code: Transcription factor LBX1 (281 aa).

Over residues 1 to 20 (MTSKEDGKAAPGEERRRSPL) the composition is skewed to basic and acidic residues. The interval 1-35 (MTSKEDGKAAPGEERRRSPLDHLPPPANSNKPLTP) is disordered. Positions 125 to 184 (RRKSRTAFTNHQIYELEKRFLYQKYLSPADRDQIAQQLGLTNAQVITWFQNRRAKLKRDL) form a DNA-binding region, homeobox. The interval 214-281 (NSEATAGGGG…EEDEEIDVDD (68 aa)) is disordered. A compositionally biased stretch (polar residues) spans 253–267 (SPASPLTDQPASSQD). Residues 268–281 (CSEDEEDEEIDVDD) show a composition bias toward acidic residues.

In terms of assembly, interacts with SKOR1 which acts as a transcriptional corepressor.

It localises to the nucleus. Transcription factor required for the development of GABAergic interneurons in the dorsal horn of the spinal cord and migration and further development of hypaxial muscle precursor cells for limb muscles, diaphragm and hypoglossal cord. The chain is Transcription factor LBX1 (LBX1) from Homo sapiens (Human).